Consider the following 88-residue polypeptide: Putative transposase InsN for insertion sequence element IS911B (88 aa).

This sequence belongs to the transposase 8 family.

In terms of biological role, involved in the transposition of the insertion sequence IS911. This is Putative transposase InsN for insertion sequence element IS911B (insN2) from Escherichia coli (strain K12).